Reading from the N-terminus, the 396-residue chain is Acetate kinase (396 aa).

Asn7 is a binding site for Mg(2+). Lys14 contacts ATP. Arg88 is a binding site for substrate. The active-site Proton donor/acceptor is Asp145. Residues 205–209 (HLGNG), 279–281 (DFR), and 327–331 (GIGEN) each bind ATP. Residue Glu381 participates in Mg(2+) binding.

The protein belongs to the acetokinase family. In terms of assembly, homodimer. The cofactor is Mg(2+). It depends on Mn(2+) as a cofactor.

Its subcellular location is the cytoplasm. It carries out the reaction acetate + ATP = acetyl phosphate + ADP. It participates in metabolic intermediate biosynthesis; acetyl-CoA biosynthesis; acetyl-CoA from acetate: step 1/2. Functionally, catalyzes the formation of acetyl phosphate from acetate and ATP. Can also catalyze the reverse reaction. This Campylobacter jejuni subsp. jejuni serotype O:2 (strain ATCC 700819 / NCTC 11168) protein is Acetate kinase.